The primary structure comprises 430 residues: MKQALRVAFGFLILWASVLHAEVRIVIDSGVDSGRPIGVVPFQWAGPGAAPEDIGGIVAADLRNSGKFNPLDRARLPQQPGSAQEVQPAAWSALGIDAVVVGQVTPNPDGSYNVAYQLVDTGGAPGTVLAQNSYKVNKQWLRYAGHTASDEVFEKLTGIKGAFRTRIAYVVQTNGGQFPYELRVSDYDGYNQFVVHRSPHPLMSPAWSPDGSKLAYVTFESGRSALVIQTLANGAVRQVASFPRHNGAPAFSPDGSKLAFALSKTGSLNLYVMDLASGQIRQVTDGRSNNTEPTWFPDSQNLAFTSDLAGRPQVYKVNINGGAPQRITWEGSQNQDADVSSDGKFMVMVSSNGGQQHIAKQDLATGGVQVLSSTFLDETPSLAPNGTMVIYSSSQGMGSVLNLVSTDGRFKARLPATDGQVKFPAWSPYL.

The signal sequence occupies residues 1–21; the sequence is MKQALRVAFGFLILWASVLHA.

The protein belongs to the TolB family. The Tol-Pal system is composed of five core proteins: the inner membrane proteins TolA, TolQ and TolR, the periplasmic protein TolB and the outer membrane protein Pal. They form a network linking the inner and outer membranes and the peptidoglycan layer.

It is found in the periplasm. Part of the Tol-Pal system, which plays a role in outer membrane invagination during cell division and is important for maintaining outer membrane integrity. TolB occupies a key intermediary position in the Tol-Pal system because it communicates directly with both membrane-embedded components, Pal in the outer membrane and TolA in the inner membrane. This chain is Tol-Pal system protein TolB, found in Shigella flexneri.